Reading from the N-terminus, the 313-residue chain is Ribosomal RNA small subunit methyltransferase H (313 aa).

S-adenosyl-L-methionine contacts are provided by residues 35–37, Asp-55, Phe-79, Asp-100, and Gln-107; that span reads GGH.

Belongs to the methyltransferase superfamily. RsmH family.

The protein localises to the cytoplasm. It carries out the reaction cytidine(1402) in 16S rRNA + S-adenosyl-L-methionine = N(4)-methylcytidine(1402) in 16S rRNA + S-adenosyl-L-homocysteine + H(+). Specifically methylates the N4 position of cytidine in position 1402 (C1402) of 16S rRNA. The polypeptide is Ribosomal RNA small subunit methyltransferase H (Burkholderia orbicola (strain AU 1054)).